Consider the following 162-residue polypeptide: Probable chemoreceptor glutamine deamidase CheD 3 (162 aa).

This sequence belongs to the CheD family.

It carries out the reaction L-glutaminyl-[protein] + H2O = L-glutamyl-[protein] + NH4(+). Functionally, probably deamidates glutamine residues to glutamate on methyl-accepting chemotaxis receptors (MCPs), playing an important role in chemotaxis. In Geobacter sulfurreducens (strain ATCC 51573 / DSM 12127 / PCA), this protein is Probable chemoreceptor glutamine deamidase CheD 3.